Consider the following 909-residue polypeptide: Translation initiation factor IF-2 (909 aa).

Residues 49-314 (LNREQGGSAG…GKQRKTSTLQ (266 aa)) are disordered. Composition is skewed to basic and acidic residues over residues 99 to 177 (DAVE…EHKQ), 186 to 236 (IQSE…KWSS), and 255 to 270 (RAAE…GDRR). A compositionally biased stretch (basic residues) spans 271–285 (ARGRSGKATRQKKNN). Basic and acidic residues predominate over residues 286–299 (KHSESKADREEARA). Residues 408–577 (PRAPVVTIMG…LLQAEVLELK (170 aa)) form the tr-type G domain. Positions 417–424 (GHVDHGKT) are G1. 417 to 424 (GHVDHGKT) contacts GTP. The G2 stretch occupies residues 442–446 (GITQH). The segment at 463 to 466 (DTPG) is G3. GTP is bound by residues 463–467 (DTPGH) and 517–520 (NKID). Residues 517 to 520 (NKID) are G4. Residues 553 to 555 (SAK) are G5.

Belongs to the TRAFAC class translation factor GTPase superfamily. Classic translation factor GTPase family. IF-2 subfamily.

The protein localises to the cytoplasm. Functionally, one of the essential components for the initiation of protein synthesis. Protects formylmethionyl-tRNA from spontaneous hydrolysis and promotes its binding to the 30S ribosomal subunits. Also involved in the hydrolysis of GTP during the formation of the 70S ribosomal complex. In Photorhabdus laumondii subsp. laumondii (strain DSM 15139 / CIP 105565 / TT01) (Photorhabdus luminescens subsp. laumondii), this protein is Translation initiation factor IF-2.